A 239-amino-acid polypeptide reads, in one-letter code: Methylthioribulose-1-phosphate dehydratase (239 aa).

Cys94 serves as a coordination point for substrate. Positions 112 and 114 each coordinate Zn(2+). The active-site Proton donor/acceptor is the Glu136. Position 192 (His192) interacts with Zn(2+).

This sequence belongs to the aldolase class II family. MtnB subfamily. Zn(2+) serves as cofactor.

The protein localises to the cytoplasm. The enzyme catalyses 5-(methylsulfanyl)-D-ribulose 1-phosphate = 5-methylsulfanyl-2,3-dioxopentyl phosphate + H2O. It participates in amino-acid biosynthesis; L-methionine biosynthesis via salvage pathway; L-methionine from S-methyl-5-thio-alpha-D-ribose 1-phosphate: step 2/6. Its function is as follows. Catalyzes the dehydration of methylthioribulose-1-phosphate (MTRu-1-P) into 2,3-diketo-5-methylthiopentyl-1-phosphate (DK-MTP-1-P). Functions in the methionine salvage pathway. May play a role in apoptosis. This is Methylthioribulose-1-phosphate dehydratase from Xenopus laevis (African clawed frog).